The chain runs to 363 residues: NADH-quinone oxidoreductase subunit H (363 aa).

Transmembrane regions (helical) follow at residues 29–49, 62–82, 94–114, 127–147, 166–186, 202–222, 239–257, 264–286, 293–313, and 339–359; these read VLKI…YVVW, GPMY…KLLF, VIFV…WAVV, VGLL…ILAG, VVSY…AAGS, FFDW…VSGV, IVAG…LFFL, ILVS…QGWV, LIDW…LFFA, and FIPL…SGVI.

It belongs to the complex I subunit 1 family. NDH-1 is composed of 14 different subunits. Subunits NuoA, H, J, K, L, M, N constitute the membrane sector of the complex.

The protein resides in the cell inner membrane. It catalyses the reaction a quinone + NADH + 5 H(+)(in) = a quinol + NAD(+) + 4 H(+)(out). Functionally, NDH-1 shuttles electrons from NADH, via FMN and iron-sulfur (Fe-S) centers, to quinones in the respiratory chain. The immediate electron acceptor for the enzyme in this species is believed to be ubiquinone. Couples the redox reaction to proton translocation (for every two electrons transferred, four hydrogen ions are translocated across the cytoplasmic membrane), and thus conserves the redox energy in a proton gradient. This subunit may bind ubiquinone. This is NADH-quinone oxidoreductase subunit H from Xylella fastidiosa (strain M12).